Reading from the N-terminus, the 156-residue chain is SPbeta prophage-derived uncharacterized protein YosH (156 aa).

This chain is SPbeta prophage-derived uncharacterized protein YosH (yosH), found in Bacillus subtilis (strain 168).